Here is a 242-residue protein sequence, read N- to C-terminus: Segregation and condensation protein A (242 aa).

This sequence belongs to the ScpA family. Component of a cohesin-like complex composed of ScpA, ScpB and the Smc homodimer, in which ScpA and ScpB bind to the head domain of Smc. The presence of the three proteins is required for the association of the complex with DNA.

It is found in the cytoplasm. Its function is as follows. Participates in chromosomal partition during cell division. May act via the formation of a condensin-like complex containing Smc and ScpB that pull DNA away from mid-cell into both cell halves. The chain is Segregation and condensation protein A from Lactococcus lactis subsp. lactis (strain IL1403) (Streptococcus lactis).